Consider the following 450-residue polypeptide: Probable malate:quinone oxidoreductase (450 aa).

This sequence belongs to the MQO family. The cofactor is FAD.

It catalyses the reaction (S)-malate + a quinone = a quinol + oxaloacetate. The protein operates within carbohydrate metabolism; tricarboxylic acid cycle; oxaloacetate from (S)-malate (quinone route): step 1/1. The polypeptide is Probable malate:quinone oxidoreductase (Helicobacter acinonychis (strain Sheeba)).